Here is a 348-residue protein sequence, read N- to C-terminus: Aldose 1-epimerase (348 aa).

Arginine 80 is a binding site for substrate. The active-site Proton donor is histidine 180. A substrate-binding site is contributed by aspartate 243. Glutamate 311 functions as the Proton acceptor in the catalytic mechanism.

The protein belongs to the aldose epimerase family.

It catalyses the reaction alpha-D-glucose = beta-D-glucose. Its pathway is carbohydrate metabolism; hexose metabolism. Its function is as follows. Mutarotase converts alpha-aldose to the beta-anomer. It is active on D-glucose, L-arabinose, D-xylose, D-galactose, maltose and lactose. The protein is Aldose 1-epimerase (galM) of Streptococcus thermophilus.